We begin with the raw amino-acid sequence, 79 residues long: Small ribosomal subunit protein bS18 (79 aa).

This sequence belongs to the bacterial ribosomal protein bS18 family. In terms of assembly, part of the 30S ribosomal subunit. Forms a tight heterodimer with protein bS6.

In terms of biological role, binds as a heterodimer with protein bS6 to the central domain of the 16S rRNA, where it helps stabilize the platform of the 30S subunit. This chain is Small ribosomal subunit protein bS18, found in Streptococcus pneumoniae serotype 19F (strain G54).